Consider the following 219-residue polypeptide: ATP-dependent dethiobiotin synthetase BioD (219 aa).

An ATP-binding site is contributed by G12 to I17. A Mg(2+)-binding site is contributed by T16. Residue K32 is part of the active site. ATP-binding positions include D43 and E96 to G99. Mg(2+) is bound by residues D43 and E96.

The protein belongs to the dethiobiotin synthetase family. Homodimer. Mg(2+) is required as a cofactor.

The protein localises to the cytoplasm. It catalyses the reaction (7R,8S)-7,8-diammoniononanoate + CO2 + ATP = (4R,5S)-dethiobiotin + ADP + phosphate + 3 H(+). The protein operates within cofactor biosynthesis; biotin biosynthesis; biotin from 7,8-diaminononanoate: step 1/2. In terms of biological role, catalyzes a mechanistically unusual reaction, the ATP-dependent insertion of CO2 between the N7 and N8 nitrogen atoms of 7,8-diaminopelargonic acid (DAPA, also called 7,8-diammoniononanoate) to form a ureido ring. In Chlamydia pneumoniae (Chlamydophila pneumoniae), this protein is ATP-dependent dethiobiotin synthetase BioD.